We begin with the raw amino-acid sequence, 313 residues long: ADP,ATP carrier protein (313 aa).

Solcar repeat units lie at residues 11-104 (PPFV…FKKM), 116-208 (KWMA…IKPV), and 216-302 (NNFL…LQVL). The next 5 membrane-spanning stretches (helical) occupy residues 13–40 (FVAD…IKLL), 81–105 (TANV…KKMF), 114–134 (YWKW…TSLL), 184–205 (FGPS…YDSI), and 219–239 (LASF…SYPL). The ADP site is built by Arg86 and Arg98. Arg243 serves as a coordination point for ADP. The tract at residues 243–248 (RRRMMM) is important for transport activity. The short motif at 243-248 (RRRMMM) is the Nucleotide carrier signature motif element. A helical membrane pass occupies residues 279-299 (AGANILRGVAGAGVLSIYDQL).

The protein belongs to the mitochondrial carrier (TC 2.A.29) family. As to quaternary structure, monomer.

It localises to the mitochondrion inner membrane. It carries out the reaction ADP(in) + ATP(out) = ADP(out) + ATP(in). Its activity is regulated as follows. The matrix-open state (m-state) is inhibited by the membrane-permeable bongkrekic acid (BKA). The cytoplasmic-open state (c-state) is inhibited by the membrane-impermeable toxic inhibitor carboxyatractyloside (CATR). Its function is as follows. ADP:ATP antiporter that mediates import of ADP into the mitochondrial matrix for ATP synthesis, and export of ATP out to fuel the cell. Cycles between the cytoplasmic-open state (c-state) and the matrix-open state (m-state): operates by the alternating access mechanism with a single substrate-binding site intermittently exposed to either the cytosolic (c-state) or matrix (m-state) side of the inner mitochondrial membrane. This Neurospora crassa (strain ATCC 24698 / 74-OR23-1A / CBS 708.71 / DSM 1257 / FGSC 987) protein is ADP,ATP carrier protein (aac).